Consider the following 256-residue polypeptide: MLRIADKTFDSHLFTGTGKFASSQLMVEAIRASGSQLVTLAMKRVDLRQHNDAILEPLIAAGVALLPNTSGAKTAEEAIFAAHLAREALGTNWLKLEIHPDARWLLPDPIETLKAAETLVQQGFVVLPYCGADPVLCKRLEEVGCAAVMPLGAPIGSNQGLETRAMLEIIIQQATVPVVVDAGIGVPSHATQALEMGADAVLVNTAIAVADDPVNMAKAFRLAVEVGLLARQSGPGSRSYFAHATSPLTGFLEASA.

The active-site Schiff-base intermediate with DXP is the Lys95. 1-deoxy-D-xylulose 5-phosphate contacts are provided by residues Gly156, Ala182–Gly183, and Asn204–Thr205.

Belongs to the ThiG family. In terms of assembly, homotetramer. Forms heterodimers with either ThiH or ThiS.

It localises to the cytoplasm. It catalyses the reaction [ThiS sulfur-carrier protein]-C-terminal-Gly-aminoethanethioate + 2-iminoacetate + 1-deoxy-D-xylulose 5-phosphate = [ThiS sulfur-carrier protein]-C-terminal Gly-Gly + 2-[(2R,5Z)-2-carboxy-4-methylthiazol-5(2H)-ylidene]ethyl phosphate + 2 H2O + H(+). It functions in the pathway cofactor biosynthesis; thiamine diphosphate biosynthesis. Functionally, catalyzes the rearrangement of 1-deoxy-D-xylulose 5-phosphate (DXP) to produce the thiazole phosphate moiety of thiamine. Sulfur is provided by the thiocarboxylate moiety of the carrier protein ThiS. In vitro, sulfur can be provided by H(2)S. This Shigella flexneri protein is Thiazole synthase.